Reading from the N-terminus, the 647-residue chain is DNA mismatch repair protein MutL (647 aa).

Residues 375-433 form a disordered region; the sequence is KQEEPQAVKQPTQLWQPPKQEWQPPQSLVREEQSWQPSTKPIIEEPIQEEKSWDSNEEG. Residues 387 to 400 are compositionally biased toward low complexity; the sequence is QLWQPPKQEWQPPQ.

It belongs to the DNA mismatch repair MutL/HexB family.

Its function is as follows. This protein is involved in the repair of mismatches in DNA. It is required for dam-dependent methyl-directed DNA mismatch repair. May act as a 'molecular matchmaker', a protein that promotes the formation of a stable complex between two or more DNA-binding proteins in an ATP-dependent manner without itself being part of a final effector complex. The polypeptide is DNA mismatch repair protein MutL (Bacillus cereus (strain AH820)).